A 224-amino-acid chain; its full sequence is Heme response regulator HssR (224 aa).

One can recognise a Response regulatory domain in the interval 3 to 116; it reads TCLIVDDDPK…ELMFRIKAVL (114 aa). Aspartate 52 is subject to 4-aspartylphosphate. Residues 124-222 constitute a DNA-binding region (ompR/PhoB-type); that stretch reads NNEVSIGNLT…VRGLGYKVDD (99 aa).

Phosphorylated by HssS.

Its subcellular location is the cytoplasm. Its function is as follows. Member of the two-component regulatory system HssS/HssR involved in intracellular heme homeostasis and tempering of staphylococcal virulence. Phosphorylated HssR binds to a direct repeat sequence within hrtAB promoter and activates the expression of hrtAB, an efflux pump, in response to extracellular heme, hemin, hemoglobin or blood. The sequence is that of Heme response regulator HssR (hssR) from Staphylococcus saprophyticus subsp. saprophyticus (strain ATCC 15305 / DSM 20229 / NCIMB 8711 / NCTC 7292 / S-41).